Here is a 334-residue protein sequence, read N- to C-terminus: N-acetyl-gamma-glutamyl-phosphate reductase (334 aa).

C154 is a catalytic residue.

This sequence belongs to the NAGSA dehydrogenase family. Type 1 subfamily.

Its subcellular location is the cytoplasm. The enzyme catalyses N-acetyl-L-glutamate 5-semialdehyde + phosphate + NADP(+) = N-acetyl-L-glutamyl 5-phosphate + NADPH + H(+). Its pathway is amino-acid biosynthesis; L-arginine biosynthesis; N(2)-acetyl-L-ornithine from L-glutamate: step 3/4. In terms of biological role, catalyzes the NADPH-dependent reduction of N-acetyl-5-glutamyl phosphate to yield N-acetyl-L-glutamate 5-semialdehyde. The protein is N-acetyl-gamma-glutamyl-phosphate reductase of Salmonella typhi.